The sequence spans 330 residues: Probable pectinesterase 55 (330 aa).

An N-terminal signal peptide occupies residues 1–24 (MGTHRIILGLAALCCFCLPHLIEA). N-linked (GlcNAc...) asparagine glycosylation is found at Asn38 and Asn52. The Proton donor role is filled by Asp161. The active-site Nucleophile is the Asp182. The substrate site is built by Arg243 and Trp245. Residues Asn257 and Asn292 are each glycosylated (N-linked (GlcNAc...) asparagine).

It belongs to the pectinesterase family.

Its subcellular location is the secreted. The protein resides in the cell wall. It catalyses the reaction [(1-&gt;4)-alpha-D-galacturonosyl methyl ester](n) + n H2O = [(1-&gt;4)-alpha-D-galacturonosyl](n) + n methanol + n H(+). The protein operates within glycan metabolism; pectin degradation; 2-dehydro-3-deoxy-D-gluconate from pectin: step 1/5. Acts in the modification of cell walls via demethylesterification of cell wall pectin. The protein is Probable pectinesterase 55 (PME55) of Arabidopsis thaliana (Mouse-ear cress).